The chain runs to 312 residues: MRKRRRQPSLAQLRAFAAVAEHLHFRDAAAAIGMSQPALSGAVSALEESLGVTLLERTTRKVLLSPAGERLAARAKSVLAEVGALVEEADALQAPFTGVLRLGVIPTVAPYVLPTVLRLVHDRYPRLDLQVHEEQTASLLDGLTGGRLDLLLLAVPLGVPGVVELPLFDEDFVLVTPLEHGLGGREGIPRKALRELNLLLLDEGHCLRDQALDICREAGSAGVAATTTAAGLSTLVQLVAGGLGVTLLPHTAVQVETTRSGRLLTGRFADPAPGRRIALAMRTGAARAAEYEELAAALREAMRDLPVRIVRD.

One can recognise an HTH lysR-type domain in the interval 8–65 (PSLAQLRAFAAVAEHLHFRDAAAAIGMSQPALSGAVSALEESLGVTLLERTTRKVLLS). The segment at residues 25-44 (FRDAAAAIGMSQPALSGAVS) is a DNA-binding region (H-T-H motif).

This sequence belongs to the LysR transcriptional regulatory family.

Required for the induction of a regulon of hydrogen peroxide inducible genes such as catalase and glutathione-reductase. This chain is Probable hydrogen peroxide-inducible genes activator (oxyR), found in Streptomyces viridosporus.